We begin with the raw amino-acid sequence, 508 residues long: Catalase (508 aa).

The first 21 residues, 1-21 (MHMSKSFLLISMGLASISVHA), serve as a signal peptide directing secretion. Active-site residues include His-72 and Asn-145. Tyr-353 lines the heme pocket. Residues 373 to 392 (PKSPVANHNQDGPSNNSTGL) are compositionally biased toward polar residues. Residues 373–396 (PKSPVANHNQDGPSNNSTGLGNVD) form a disordered region.

It belongs to the catalase family. Heme serves as cofactor.

It is found in the periplasm. The enzyme catalyses 2 H2O2 = O2 + 2 H2O. Its function is as follows. Decomposes hydrogen peroxide into water and oxygen; serves to protect cells from the toxic effects of hydrogen peroxide. This Vibrio vulnificus (strain CMCP6) protein is Catalase.